A 150-amino-acid chain; its full sequence is Cytochrome c oxidase subunit 5A, mitochondrial (150 aa).

The N-terminal 41 residues, 1–41 (MLGAALRRCAVAATTWAGPRGHLHSARTPGPAAAIQSVRCY), are a transit peptide targeting the mitochondrion. The SIFI-degron motif lies at 2-17 (LGAALRRCAVAATTWA). N6-acetyllysine occurs at positions 87 and 113. Thr-141 bears the Phosphothreonine mark.

The protein belongs to the cytochrome c oxidase subunit 5A family. In terms of assembly, component of the cytochrome c oxidase (complex IV, CIV), a multisubunit enzyme composed of 14 subunits. The complex is composed of a catalytic core of 3 subunits MT-CO1, MT-CO2 and MT-CO3, encoded in the mitochondrial DNA, and 11 supernumerary subunits COX4I, COX5A, COX5B, COX6A, COX6B, COX6C, COX7A, COX7B, COX7C, COX8 and NDUFA4, which are encoded in the nuclear genome. The complex exists as a monomer or a dimer and forms supercomplexes (SCs) in the inner mitochondrial membrane with NADH-ubiquinone oxidoreductase (complex I, CI) and ubiquinol-cytochrome c oxidoreductase (cytochrome b-c1 complex, complex III, CIII), resulting in different assemblies (supercomplex SCI(1)III(2)IV(1) and megacomplex MCI(2)III(2)IV(2)). Interacts with AFG1L. Interacts with RAB5IF. Post-translationally, in response to mitochondrial stress, the precursor protein is ubiquitinated by the SIFI complex in the cytoplasm before mitochondrial import, leading to its degradation. Within the SIFI complex, UBR4 initiates ubiquitin chain that are further elongated or branched by KCMF1.

The protein localises to the mitochondrion inner membrane. It functions in the pathway energy metabolism; oxidative phosphorylation. In terms of biological role, component of the cytochrome c oxidase, the last enzyme in the mitochondrial electron transport chain which drives oxidative phosphorylation. The respiratory chain contains 3 multisubunit complexes succinate dehydrogenase (complex II, CII), ubiquinol-cytochrome c oxidoreductase (cytochrome b-c1 complex, complex III, CIII) and cytochrome c oxidase (complex IV, CIV), that cooperate to transfer electrons derived from NADH and succinate to molecular oxygen, creating an electrochemical gradient over the inner membrane that drives transmembrane transport and the ATP synthase. Cytochrome c oxidase is the component of the respiratory chain that catalyzes the reduction of oxygen to water. Electrons originating from reduced cytochrome c in the intermembrane space (IMS) are transferred via the dinuclear copper A center (CU(A)) of subunit 2 and heme A of subunit 1 to the active site in subunit 1, a binuclear center (BNC) formed by heme A3 and copper B (CU(B)). The BNC reduces molecular oxygen to 2 water molecules using 4 electrons from cytochrome c in the IMS and 4 protons from the mitochondrial matrix. This chain is Cytochrome c oxidase subunit 5A, mitochondrial (COX5A), found in Symphalangus syndactylus (Siamang).